Here is a 272-residue protein sequence, read N- to C-terminus: Hydroxyethylthiazole kinase (272 aa).

Methionine 46 provides a ligand contact to substrate. ATP contacts are provided by arginine 122 and threonine 168. Glycine 195 contributes to the substrate binding site.

The protein belongs to the Thz kinase family. It depends on Mg(2+) as a cofactor.

The catalysed reaction is 5-(2-hydroxyethyl)-4-methylthiazole + ATP = 4-methyl-5-(2-phosphooxyethyl)-thiazole + ADP + H(+). Its pathway is cofactor biosynthesis; thiamine diphosphate biosynthesis; 4-methyl-5-(2-phosphoethyl)-thiazole from 5-(2-hydroxyethyl)-4-methylthiazole: step 1/1. Catalyzes the phosphorylation of the hydroxyl group of 4-methyl-5-beta-hydroxyethylthiazole (THZ). The polypeptide is Hydroxyethylthiazole kinase (Alkaliphilus metalliredigens (strain QYMF)).